A 349-amino-acid chain; its full sequence is Single-stranded TG1-3 DNA-binding protein (349 aa).

Residues 45–127 form the RRM 1 domain; that stretch reads FRVFVGRLST…REIVVQKARP (83 aa). Disordered stretches follow at residues 121-208 and 298-349; these read VVQK…PNSI and EDKQ…AITA. S152 bears the Phosphoserine mark. Residues 168–179 are compositionally biased toward polar residues; sequence ANTATAPSSNEA. Over residues 181-191 the composition is skewed to basic and acidic residues; the sequence is GVDKKQNEIKG. One can recognise an RRM 2 domain in the interval 206–296; it reads NSIYVSGLSV…LTLVVKSAVF (91 aa). Basic and acidic residues-rich tracts occupy residues 298-310 and 327-340; these read EDKQNDENEKNEN and TEPKASEVDSEEKS.

It is found in the cytoplasm. Its subcellular location is the nucleus. It localises to the chromosome. The protein localises to the telomere. Functionally, binds single-stranded telomeric sequences of the type (TG[1-3])n in vitro. Has a role in meiosis. The polypeptide is Single-stranded TG1-3 DNA-binding protein (tcg1) (Schizosaccharomyces pombe (strain 972 / ATCC 24843) (Fission yeast)).